The chain runs to 341 residues: UDP-N-acetylenolpyruvoylglucosamine reductase (341 aa).

Positions 13-185 constitute an FAD-binding PCMH-type domain; it reads FGVEQSCLSM…TAVGLRLPKA (173 aa). The active site involves Arg-161. The active-site Proton donor is Ser-231. Residue Glu-327 is part of the active site.

This sequence belongs to the MurB family. Requires FAD as cofactor.

The protein localises to the cytoplasm. The catalysed reaction is UDP-N-acetyl-alpha-D-muramate + NADP(+) = UDP-N-acetyl-3-O-(1-carboxyvinyl)-alpha-D-glucosamine + NADPH + H(+). The protein operates within cell wall biogenesis; peptidoglycan biosynthesis. In terms of biological role, cell wall formation. This is UDP-N-acetylenolpyruvoylglucosamine reductase from Shewanella sp. (strain MR-4).